Here is a 140-residue protein sequence, read N- to C-terminus: Acyl-coenzyme A thioesterase PaaI (140 aa).

In terms of assembly, homotetramer.

Its pathway is aromatic compound metabolism; phenylacetate degradation. Its function is as follows. Thioesterase with a preference for ring-hydroxylated phenylacetyl-CoA esters. Hydrolyzes 3,4-dihydroxyphenylacetyl-CoA, 3-hydroxyphenylacetyl-CoA and 4-hydroxyphenylacetyl-CoA. Inactive towards 4-hydroxybenzoyl-CoA and 4-hydroxyphenacyl-CoA. The protein is Acyl-coenzyme A thioesterase PaaI (paaI) of Escherichia coli (strain K12).